Here is a 279-residue protein sequence, read N- to C-terminus: Large ribosomal subunit protein uL2 (279 aa).

Disordered stretches follow at residues 1-28 (MPAR…TKEK) and 221-279 (RGTV…GRRR). Residues 12–22 (GRRNSSVLTRD) show a composition bias toward polar residues.

Belongs to the universal ribosomal protein uL2 family. As to quaternary structure, part of the 50S ribosomal subunit. Forms a bridge to the 30S subunit in the 70S ribosome.

Functionally, one of the primary rRNA binding proteins. Required for association of the 30S and 50S subunits to form the 70S ribosome, for tRNA binding and peptide bond formation. It has been suggested to have peptidyltransferase activity; this is somewhat controversial. Makes several contacts with the 16S rRNA in the 70S ribosome. The sequence is that of Large ribosomal subunit protein uL2 from Rubrobacter xylanophilus (strain DSM 9941 / JCM 11954 / NBRC 16129 / PRD-1).